Reading from the N-terminus, the 134-residue chain is Small ribosomal subunit protein uS11 (134 aa).

The protein belongs to the universal ribosomal protein uS11 family. Part of the 30S ribosomal subunit. Interacts with proteins S7 and S18. Binds to IF-3.

In terms of biological role, located on the platform of the 30S subunit, it bridges several disparate RNA helices of the 16S rRNA. Forms part of the Shine-Dalgarno cleft in the 70S ribosome. This is Small ribosomal subunit protein uS11 from Acidovorax ebreus (strain TPSY) (Diaphorobacter sp. (strain TPSY)).